A 465-amino-acid polypeptide reads, in one-letter code: UDP-N-acetylmuramate--L-alanine ligase (465 aa).

112-118 (GTHGKTT) contributes to the ATP binding site.

This sequence belongs to the MurCDEF family.

It is found in the cytoplasm. It carries out the reaction UDP-N-acetyl-alpha-D-muramate + L-alanine + ATP = UDP-N-acetyl-alpha-D-muramoyl-L-alanine + ADP + phosphate + H(+). The protein operates within cell wall biogenesis; peptidoglycan biosynthesis. In terms of biological role, cell wall formation. The polypeptide is UDP-N-acetylmuramate--L-alanine ligase (Burkholderia lata (strain ATCC 17760 / DSM 23089 / LMG 22485 / NCIMB 9086 / R18194 / 383)).